We begin with the raw amino-acid sequence, 460 residues long: DL-alanine permease SerP2 (460 aa).

A run of 12 helical transmembrane segments spans residues L26–H46, L47–L67, F98–I118, F124–L144, F160–F180, F209–T229, Q246–Y266, F278–V298, A344–I364, F368–I388, H410–F430, and T433–F453.

Belongs to the amino acid-polyamine-organocation (APC) superfamily. Amino acid transporter (AAT) (TC 2.A.3.1) family.

The protein localises to the cell membrane. In terms of biological role, transports DL-alanine, DL-serine and glycine. The preferred substrate is DL-alanine. L-serine is a low-affinity substrate. In Lactococcus lactis subsp. cremoris (strain MG1363), this protein is DL-alanine permease SerP2.